The following is a 151-amino-acid chain: Deoxyuridine 5'-triphosphate nucleotidohydrolase (151 aa).

Residues 70-72, asparagine 83, 87-89, and methionine 97 each bind substrate; these read RSG and LID.

The protein belongs to the dUTPase family. As to quaternary structure, homotrimer. Mg(2+) serves as cofactor.

The enzyme catalyses dUTP + H2O = dUMP + diphosphate + H(+). Its pathway is pyrimidine metabolism; dUMP biosynthesis; dUMP from dCTP (dUTP route): step 2/2. In terms of biological role, this enzyme is involved in nucleotide metabolism: it produces dUMP, the immediate precursor of thymidine nucleotides and it decreases the intracellular concentration of dUTP so that uracil cannot be incorporated into DNA. This chain is Deoxyuridine 5'-triphosphate nucleotidohydrolase, found in Escherichia coli O45:K1 (strain S88 / ExPEC).